Here is a 1117-residue protein sequence, read N- to C-terminus: Cytospin-A (1117 aa).

Disordered stretches follow at residues 1 to 176, 293 to 323, and 358 to 390; these read MKKA…NQIS, SLSP…GSVE, and SSDD…NASE. Residues 45–90 show a composition bias toward low complexity; it reads TAASLSKTKSSDDLLAGMAGGVTVTNGVKGKKSTCPSAAPSASAPA. Polar residues predominate over residues 93–117; the sequence is TVENKSKISTGTASSTKRSTSTGNK. 2 stretches are compositionally biased toward basic and acidic residues: residues 120-131 and 158-171; these read SSTRERLRERTR and TATE…KSKS. The stretch at 168–280 forms a coiled coil; the sequence is KSKSDNQISD…LNALGFSLEQ (113 aa). Residues 293-303 are compositionally biased toward polar residues; sequence SLSPEITPGNQ. Positions 358 to 377 are enriched in low complexity; the sequence is SSDDALDAPSSSESEGIPSI. Phosphoserine occurs at positions 384, 385, and 389. Coiled coils occupy residues 394 to 449 and 487 to 807; these read ACLT…MESL and RYME…RGRV. Phosphoserine occurs at positions 868, 881, and 887. Residues 920-997 form a disordered region; the sequence is TSSASRPASL…PTTRSRIREE (78 aa). Residues 946-956 are compositionally biased toward basic and acidic residues; the sequence is RSSEEVKRDIS. Residues 971–990 show a composition bias toward low complexity; sequence TTSPQLSLSSSPTASVTPTT. A Calponin-homology (CH) domain is found at 1011–1116; the sequence is GSKRNALLKW…YVTAIYKYFE (106 aa).

Belongs to the cytospin-A family. May interact with both microtubules and actin cytoskeleton.

It is found in the cytoplasm. Its subcellular location is the cytoskeleton. The protein localises to the spindle. The protein resides in the cell junction. It localises to the gap junction. Involved in cytokinesis and spindle organization. May play a role in actin cytoskeleton organization and microtubule stabilization and hence required for proper cell adhesion and migration. The protein is Cytospin-A (SPECC1L) of Homo sapiens (Human).